A 116-amino-acid polypeptide reads, in one-letter code: Ribonuclease P protein component (116 aa).

Belongs to the RnpA family. Consists of a catalytic RNA component (M1 or rnpB) and a protein subunit.

It carries out the reaction Endonucleolytic cleavage of RNA, removing 5'-extranucleotides from tRNA precursor.. Its function is as follows. RNaseP catalyzes the removal of the 5'-leader sequence from pre-tRNA to produce the mature 5'-terminus. It can also cleave other RNA substrates such as 4.5S RNA. The protein component plays an auxiliary but essential role in vivo by binding to the 5'-leader sequence and broadening the substrate specificity of the ribozyme. This chain is Ribonuclease P protein component, found in Acholeplasma laidlawii (strain PG-8A).